Reading from the N-terminus, the 124-residue chain is 5-hydroxyisourate hydrolase (124 aa).

Positions 15, 53, and 121 each coordinate substrate.

Belongs to the transthyretin family. 5-hydroxyisourate hydrolase subfamily. Homotetramer.

It carries out the reaction 5-hydroxyisourate + H2O = 5-hydroxy-2-oxo-4-ureido-2,5-dihydro-1H-imidazole-5-carboxylate + H(+). In terms of biological role, catalyzes the hydrolysis of 5-hydroxyisourate (HIU) to 2-oxo-4-hydroxy-4-carboxy-5-ureidoimidazoline (OHCU). The chain is 5-hydroxyisourate hydrolase from Mesorhizobium japonicum (strain LMG 29417 / CECT 9101 / MAFF 303099) (Mesorhizobium loti (strain MAFF 303099)).